The chain runs to 211 residues: Urease accessory protein UreE (211 aa).

The segment at 170–211 is disordered; it reads EHHGHSHDRGCDHSHSHSHDHDHDHGHVHGPGCGHAPHHRHD. The span at 176-196 shows a compositional bias: basic and acidic residues; sequence HDRGCDHSHSHSHDHDHDHGH.

The protein belongs to the UreE family.

The protein localises to the cytoplasm. In terms of biological role, involved in urease metallocenter assembly. Binds nickel. Probably functions as a nickel donor during metallocenter assembly. This is Urease accessory protein UreE from Ralstonia nicotianae (strain ATCC BAA-1114 / GMI1000) (Ralstonia solanacearum).